The primary structure comprises 242 residues: Octanoyltransferase (242 aa).

The BPL/LPL catalytic domain maps to 31 to 206 (SQTTDEIWFL…LFLKNFGYNQ (176 aa)). Residues 70-77 (RGGQVTYH), 137-139 (SIG), and 150-152 (GLA) each bind substrate. C168 serves as the catalytic Acyl-thioester intermediate.

This sequence belongs to the LipB family.

It localises to the cytoplasm. The catalysed reaction is octanoyl-[ACP] + L-lysyl-[protein] = N(6)-octanoyl-L-lysyl-[protein] + holo-[ACP] + H(+). It participates in protein modification; protein lipoylation via endogenous pathway; protein N(6)-(lipoyl)lysine from octanoyl-[acyl-carrier-protein]: step 1/2. Functionally, catalyzes the transfer of endogenously produced octanoic acid from octanoyl-acyl-carrier-protein onto the lipoyl domains of lipoate-dependent enzymes. Lipoyl-ACP can also act as a substrate although octanoyl-ACP is likely to be the physiological substrate. This is Octanoyltransferase from Coxiella burnetii (strain RSA 493 / Nine Mile phase I).